Consider the following 245-residue polypeptide: Ribonuclease 3 (245 aa).

The RNase III domain occupies 19 to 148 (FKVFQEKIGI…FIGALYLDQG (130 aa)). Residue Glu61 coordinates Mg(2+). Asp65 is a catalytic residue. Mg(2+) contacts are provided by Asp134 and Glu137. Residue Glu137 is part of the active site. In terms of domain architecture, DRBM spans 174–243 (DYKSQLQELI…AAEALKKLKE (70 aa)).

This sequence belongs to the ribonuclease III family. As to quaternary structure, homodimer. The cofactor is Mg(2+).

The protein resides in the cytoplasm. It carries out the reaction Endonucleolytic cleavage to 5'-phosphomonoester.. Functionally, digests double-stranded RNA. Involved in the processing of primary rRNA transcript to yield the immediate precursors to the large and small rRNAs (23S and 16S). Processes some mRNAs, and tRNAs when they are encoded in the rRNA operon. Processes pre-crRNA and tracrRNA of type II CRISPR loci if present in the organism. This chain is Ribonuclease 3, found in Bacillus cereus (strain AH187).